Reading from the N-terminus, the 155-residue chain is uncharacterized protein (155 aa).

The 62-residue stretch at 4–65 folds into the HTH asnC-type domain; sequence IDEIDEVIVR…VVDPSFFGEF (62 aa). The H-T-H motif DNA-binding region spans 23–42; that stretch reads LTELGRKVGLTASAVKNRIE.

This is an uncharacterized protein from Pyrococcus horikoshii (strain ATCC 700860 / DSM 12428 / JCM 9974 / NBRC 100139 / OT-3).